We begin with the raw amino-acid sequence, 80 residues long: Spermatid-specific protein S2 (80 aa).

Basic residues predominate over residues 1-36 (VKSRYHQRQYRARKRYAKARRTKKPKRRPKPPRKLR). The segment at 1–44 (VKSRYHQRQYRARKRYAKARRTKKPKRRPKPPRKLRYAPSKKQP) is disordered.

It localises to the nucleus. It is found in the chromosome. Functionally, involved in nuclear basic protein transition: histones are replaced by spermatid specific proteins which are themselves replaced by protamines in late spermatids. The polypeptide is Spermatid-specific protein S2 (Scyliorhinus canicula (Small-spotted catshark)).